Consider the following 532-residue polypeptide: O-phosphoserine--tRNA(Cys) ligase (532 aa).

Substrate-binding positions include 186–188 (HMT), 231–233 (SAS), 273–274 (YY), and asparagine 317.

Belongs to the class-II aminoacyl-tRNA synthetase family. O-phosphoseryl-tRNA(Cys) synthetase subfamily. In terms of assembly, homotetramer. Interacts with SepCysS.

It carries out the reaction tRNA(Cys) + O-phospho-L-serine + ATP = O-phospho-L-seryl-tRNA(Cys) + AMP + diphosphate. In terms of biological role, catalyzes the attachment of O-phosphoserine (Sep) to tRNA(Cys). The sequence is that of O-phosphoserine--tRNA(Cys) ligase from Methanothermobacter thermautotrophicus (strain ATCC 29096 / DSM 1053 / JCM 10044 / NBRC 100330 / Delta H) (Methanobacterium thermoautotrophicum).